A 141-amino-acid polypeptide reads, in one-letter code: D-aminoacyl-tRNA deacylase (141 aa).

Positions 133-134 (GP) match the Gly-cisPro motif, important for rejection of L-amino acids motif.

This sequence belongs to the DTD family. As to quaternary structure, homodimer.

The protein localises to the cytoplasm. The enzyme catalyses glycyl-tRNA(Ala) + H2O = tRNA(Ala) + glycine + H(+). It carries out the reaction a D-aminoacyl-tRNA + H2O = a tRNA + a D-alpha-amino acid + H(+). An aminoacyl-tRNA editing enzyme that deacylates mischarged D-aminoacyl-tRNAs. Also deacylates mischarged glycyl-tRNA(Ala), protecting cells against glycine mischarging by AlaRS. Acts via tRNA-based rather than protein-based catalysis; rejects L-amino acids rather than detecting D-amino acids in the active site. By recycling D-aminoacyl-tRNA to D-amino acids and free tRNA molecules, this enzyme counteracts the toxicity associated with the formation of D-aminoacyl-tRNA entities in vivo and helps enforce protein L-homochirality. This is D-aminoacyl-tRNA deacylase from Streptomyces coelicolor (strain ATCC BAA-471 / A3(2) / M145).